We begin with the raw amino-acid sequence, 183 residues long: Mitochondrial inner membrane protease subunit 2 (183 aa).

A helical membrane pass occupies residues 13–35 (AFVSGFFVAVPVTVTVLDRLAYV). Active-site residues include serine 42 and lysine 90. The disordered stretch occupies residues 161-183 (SVPPDRRPLLNWDRAAEDKYDDD). Basic and acidic residues predominate over residues 164-183 (PDRRPLLNWDRAAEDKYDDD).

It belongs to the peptidase S26 family. IMP2 subfamily. As to quaternary structure, heterodimer of 2 subunits, IMMPL1 and IMMPL2.

Its subcellular location is the mitochondrion inner membrane. Catalyzes the removal of transit peptides required for the targeting of proteins from the mitochondrial matrix, across the inner membrane, into the inter-membrane space. This chain is Mitochondrial inner membrane protease subunit 2 (immp2l), found in Danio rerio (Zebrafish).